The primary structure comprises 734 residues: Cleavage stimulation factor subunit 77 (734 aa).

HAT repeat units lie at residues 20–52, 54–85, 93–128, 139–172, 198–237, 246–278, 280–312, 314–345, 347–379, 382–414, 416–450, and 474–505; these read SPIA…AQMA, NNDD…FIRK, EGQE…FLKS, HRKT…FENT, ERKK…FEKG, SSTK…WHVK, GSTD…MEES, GAIQ…FLRR, EGVE…MAFC, KEPK…FLTR, NDDR…FEQT, and EGSS…DLDH. The tract at residues 637-734 is disordered; sequence VKQSFAAKGN…FSGELSGSTG (98 aa). The segment covering 664–677 has biased composition (basic and acidic residues); it reads LPRDRRATKRKDSD. A compositionally biased stretch (polar residues) spans 709 to 734; that stretch reads ATSSQTPTGSTSYGSAFSGELSGSTG.

As to quaternary structure, homodimer. Belongs to the CSTF complex. Forms a complex with cleavage and polyadenylation specificity factor (CPSF) subunits CPSF30, CSTF64, PCFS1, PCFS5 and FIPS5.

It localises to the nucleus. Its function is as follows. One of the multiple factors required for polyadenylation and 3'-end cleavage of pre-mRNAs. Required for the targeted 3' processing of antisense transcripts that triggers transcriptional silencing of the corresponding sense gene. This Arabidopsis thaliana (Mouse-ear cress) protein is Cleavage stimulation factor subunit 77.